The chain runs to 368 residues: Aminomethyltransferase (368 aa).

Belongs to the GcvT family. As to quaternary structure, the glycine cleavage system is composed of four proteins: P, T, L and H.

The catalysed reaction is N(6)-[(R)-S(8)-aminomethyldihydrolipoyl]-L-lysyl-[protein] + (6S)-5,6,7,8-tetrahydrofolate = N(6)-[(R)-dihydrolipoyl]-L-lysyl-[protein] + (6R)-5,10-methylene-5,6,7,8-tetrahydrofolate + NH4(+). In terms of biological role, the glycine cleavage system catalyzes the degradation of glycine. The sequence is that of Aminomethyltransferase from Thermoanaerobacter pseudethanolicus (strain ATCC 33223 / 39E) (Clostridium thermohydrosulfuricum).